A 120-amino-acid chain; its full sequence is UPF0231 protein CKO_03249 (120 aa).

It belongs to the UPF0231 family.

This chain is UPF0231 protein CKO_03249, found in Citrobacter koseri (strain ATCC BAA-895 / CDC 4225-83 / SGSC4696).